A 904-amino-acid polypeptide reads, in one-letter code: METLLHAKLLLSAEVESLKSGSFDQTYVKKAEHIISGESYQLVQQFVDKFKGKISISGEISTSSVIAALNDFLNVEVFKMGQENEMLFLAIALLQTFIQNNYTGPAARLKAISGLFGKTGIEIGAVNTALSRSLAIMGQPAYEFMDDPLYLVLSLLLLERITGQKSLFDVTPDQEIPLPIISAESTPGLLAVAYWWWARALLTQLSLIPEPSGFQASVASAIYQSADLAYAITKELPESIHEDFKRELCAMYYLENVKCSLAINTEHLCLPSLTRAKKITNFEFVMTGARATRTKYQQKAHAGLIILAKSFTFQNFALRTTSATPETFALESDLLLEKPHFESIADEPLDEQIYSKRQKVDLNEGYEEDKLLPLALRQENIPKLLLDLNPNDQPTLSDYDNIQLLLRLYTIKNTTPAKDPLVEEELTALLSRILYQNGDKNWSIFARSLWERSIIETTKAKTIERGLLQMQSLVEELDLKIKSKLVPSSSEINVASRLSYIHQLPFIPRWQLDATLAEKYMSLGILKSAVEIYERLGMACETALCYAAVGDEKKAEEILLQRINENDSDARAYSILGDIKQDPSLWEKSWEIGKYVNAKNSLAKYYFNPPPKSGAQPNYSATLKHLNDSLRQYPLSFETWYFYGCVGLQCGKMQIAAEAFTRCVSLDPYHALSWSNLSAAYTKMDKLKEAYSCLKRAISCDAQKNWKIWENYMLVAVKLNEWEDVLTACKQLVSIRRDKSGEGSIDLPIIEKLVELLVTSEYPEEPQQLSYFQKSCTEFICNTLPQVITTSARCWRLVARVELWRKRPWAALECHEKAYRAISHNPDLEVEEKVWNDTVDACEDLVAAYESLGEMEGKYGPGSLVCKDWKYKCRSTIKALMSKGKGRWDDSPGWDRLVEARSQI.

6 TPR repeats span residues 510–544 (WQLDATLAEKYMSLGILKSAVEIYERLGMACETAL), 563–596 (INENDSDARAYSILGDIKQDPSLWEKSWEIGKYV), 603–636 (AKYYFNPPPKSGAQPNYSATLKHLNDSLRQYPLS), 637–670 (FETWYFYGCVGLQCGKMQIAAEAFTRCVSLDPYH), 671–704 (ALSWSNLSAAYTKMDKLKEAYSCLKRAISCDAQK), and 706–739 (WKIWENYMLVAVKLNEWEDVLTACKQLVSIRRDK).

This sequence belongs to the TTC27 family.

It is found in the cytoplasm. The protein resides in the nucleus. Required for the maintenance of the cell wall integrity. The protein is Essential for maintenance of the cell wall protein 1 (EMW1) of Saccharomyces cerevisiae (strain ATCC 204508 / S288c) (Baker's yeast).